A 282-amino-acid chain; its full sequence is Proteasome subunit beta (282 aa).

The propeptide at 1-54 (MGSHRDLPAGMVNHIFTNSGISSFTEFVGSYAPDLLPGRNETLAAPVGDRIPHA) is removed in mature form; by autocatalysis. Catalysis depends on T55, which acts as the Nucleophile.

The protein belongs to the peptidase T1B family. As to quaternary structure, the 20S proteasome core is composed of 14 alpha and 14 beta subunits that assemble into four stacked heptameric rings, resulting in a barrel-shaped structure. The two inner rings, each composed of seven catalytic beta subunits, are sandwiched by two outer rings, each composed of seven alpha subunits. The catalytic chamber with the active sites is on the inside of the barrel. Has a gated structure, the ends of the cylinder being occluded by the N-termini of the alpha-subunits. Is capped by the proteasome-associated ATPase, ARC.

It localises to the cytoplasm. The enzyme catalyses Cleavage of peptide bonds with very broad specificity.. It participates in protein degradation; proteasomal Pup-dependent pathway. Its activity is regulated as follows. The formation of the proteasomal ATPase ARC-20S proteasome complex, likely via the docking of the C-termini of ARC into the intersubunit pockets in the alpha-rings, may trigger opening of the gate for substrate entry. Interconversion between the open-gate and close-gate conformations leads to a dynamic regulation of the 20S proteasome proteolysis activity. In terms of biological role, component of the proteasome core, a large protease complex with broad specificity involved in protein degradation. The polypeptide is Proteasome subunit beta (Streptosporangium roseum (strain ATCC 12428 / DSM 43021 / JCM 3005 / KCTC 9067 / NCIMB 10171 / NRRL 2505 / NI 9100)).